A 294-amino-acid chain; its full sequence is tRNA-uridine aminocarboxypropyltransferase 1 (294 aa).

Positions 158 to 185 (DMQNDSSCEPSLKRPKCSQQYDKSKNEG) are disordered. The short motif at 202 to 205 (DSTW) is the DXTW element.

It belongs to the TDD superfamily. DTWD1 family.

The protein resides in the nucleus. The enzyme catalyses a uridine in tRNA + S-adenosyl-L-methionine = a 3-[(3S)-3-amino-3-carboxypropyl]uridine in tRNA + S-methyl-5'-thioadenosine + H(+). In terms of biological role, catalyzes the formation of 3-(3-amino-3-carboxypropyl)uridine (acp3U) at position 20 in the D-loop of several cytoplasmic tRNAs (acp3U(20)). The sequence is that of tRNA-uridine aminocarboxypropyltransferase 1 from Xenopus tropicalis (Western clawed frog).